Reading from the N-terminus, the 68-residue chain is Alpha-conotoxin-like Lt1.2 (68 aa).

Residues 1–21 (MGMRMMFIMFMLVVLATTVDT) form the signal peptide. Residues 22-48 (FTSDRALDAMNAAASNKASRLIALAVR) constitute a propeptide that is removed on maturation. Disulfide bonds link Cys50/Cys56 and Cys51/Cys64. Residues 52–54 (ARA) are lacks the Ser-Xaa-Pro motif that is crucial for potent interaction with nAChR. Gly65 is subject to Glycine amide.

This sequence belongs to the conotoxin A superfamily. Expressed by the venom duct.

The protein resides in the secreted. In terms of biological role, alpha-conotoxins act on postsynaptic membranes, they bind to the nicotinic acetylcholine receptors (nAChR) and thus inhibit them. Has a distinct nAChR binding mode from other alpha-conotoxins, due to a different three residue motif (Ala-Xaa-Ala instead of the conserved Ser-Xaa-Pro motif). The sequence is that of Alpha-conotoxin-like Lt1.2 from Conus litteratus (Lettered cone).